The chain runs to 139 residues: Translation initiation factor 2 subunit beta (139 aa).

Belongs to the eIF-2-beta/eIF-5 family. As to quaternary structure, heterotrimer composed of an alpha, a beta and a gamma chain.

Functionally, eIF-2 functions in the early steps of protein synthesis by forming a ternary complex with GTP and initiator tRNA. The protein is Translation initiation factor 2 subunit beta of Sulfurisphaera tokodaii (strain DSM 16993 / JCM 10545 / NBRC 100140 / 7) (Sulfolobus tokodaii).